The chain runs to 543 residues: Glucose transporter HT1 (543 aa).

Residues 1–24 form a disordered region; that stretch reads MPEYPTEDTNASGKTSGSSPDDHT. Topologically, residues 1-38 are cytoplasmic; sequence MPEYPTEDTNASGKTSGSSPDDHTDDNAPSFFSCENLC. Residues 7–19 are compositionally biased toward polar residues; the sequence is EDTNASGKTSGSS. Residues 39–59 traverse the membrane as a helical segment; it reads IVQVPVSTGSLNGFSIGFVAV. Topologically, residues 60–120 are extracellular; sequence YMHLYEIFSG…GSGYNSLESG (61 aa). N-linked (GlcNAc...) asparagine glycosylation is found at N90 and N91. A helical transmembrane segment spans residues 121-141; sequence LFACSMIVGSMIGSIFAGKFL. Topologically, residues 142–147 are cytoplasmic; sequence SKFGLK. A helical transmembrane segment spans residues 148–168; the sequence is MSFIVSGVLGIVGSALIHVAT. Over 169 to 172 the chain is Extracellular; it reads RGST. A helical transmembrane segment spans residues 173–193; the sequence is LWVMCVGRFLMGLVLGLVCVA. Residues 194–212 lie on the Cytoplasmic side of the membrane; that stretch reads SPMYVNENAHPKYRKTIGV. The helical transmembrane segment at 213-233 threads the bilayer; the sequence is LFQVFTTFGIMFAALLGLAIV. The Extracellular segment spans residues 234 to 248; sequence KTPGHDKASGLLWRM. Residues 249-269 form a helical membrane-spanning segment; the sequence is QVFCSVSTALSALLLVLGLVV. Over 270–300 the chain is Cytoplasmic; sequence RKSKTSFAGGVDSAGEGVLDPNEYSVRQMLG. The chain crosses the membrane as a helical span at residues 301–321; it reads PLAVGAVTAGTLQLTGINAVM. Over 322 to 337 the chain is Extracellular; that stretch reads NYAPEIMRNIGMDPME. A helical transmembrane segment spans residues 338–358; it reads GNSAVMSWNFVTALVAIPLVS. At 359-364 the chain is on the cytoplasmic side; sequence RFTMRQ. Residues 365–385 traverse the membrane as a helical segment; sequence LFLACSFMASCACLIMCGIPV. The Extracellular segment spans residues 386 to 400; the sequence is YPGVASVDNRNIVAT. Residues 401 to 421 traverse the membrane as a helical segment; it reads VGIAVFIAAFEFGVGSCFFVL. Topologically, residues 422-436 are cytoplasmic; it reads AQDLFPRSFRPTGSS. Residues 437–457 form a helical membrane-spanning segment; it reads FVVMAQFIFNIMINLLYPITV. Over 458–470 the chain is Extracellular; sequence EAISGGKGKSPEK. Residues 471–491 form a helical membrane-spanning segment; sequence GQSVSFIIFGIIGIICFVLQL. Topologically, residues 492–543 are cytoplasmic; it reads RYLTPWEDGQGTSTSPTARCNAPTSPNNGEGEPATADMSPVEMSTPKHSGAA. The segment covering 503–519 has biased composition (polar residues); it reads TSTSPTARCNAPTSPNN. Residues 503 to 543 form a disordered region; that stretch reads TSTSPTARCNAPTSPNNGEGEPATADMSPVEMSTPKHSGAA.

Belongs to the major facilitator superfamily. Sugar transporter (TC 2.A.1.1) family.

The protein localises to the membrane. Its function is as follows. Facilitative glucose transporter. Binds D-fructose and cytochalasin-B, but not D-galactose. The protein is Glucose transporter HT1 (HT1) of Trypanosoma vivax (Duttonella vivax).